The following is a 249-amino-acid chain: Cilia- and flagella-associated protein 410 (249 aa).

LRR repeat units lie at residues 19-40 (NVRK…REMP), 41-62 (SLEV…RSCR), and 63-84 (RLSE…FYLK). The region spanning 97–137 (NPCCGTSPHLYRMTVLRNLPHLQKLDNQAVTEEELTRALME) is the LRRCT domain. Residues 146-203 (HREGAGNGCPKPPYALNSVSSATETSQHLLSYTEETEVQGQTTTDQSPSFSPRDTMRS) are disordered. The segment covering 162–175 (NSVSSATETSQHLL) has biased composition (polar residues).

As to quaternary structure, found in a complex with CFAP410, NEK1 and SPATA7. Interacts with NEK1. As to expression, expressed in the retina.

The protein localises to the cell projection. Its subcellular location is the cilium. The protein resides in the cytoplasm. It is found in the cytoskeleton. It localises to the cilium basal body. The protein localises to the mitochondrion. Its subcellular location is the photoreceptor outer segment. Its function is as follows. Plays a role in cilia formation and/or maintenance. Plays a role in the regulation of cell morphology and cytoskeletal organization. Involved in DNA damage repair. The chain is Cilia- and flagella-associated protein 410 from Mus musculus (Mouse).